The following is a 715-amino-acid chain: Putative pentatricopeptide repeat-containing protein At3g23330 (715 aa).

PPR repeat units lie at residues 38 to 68 (SHTSASIVISIYTNLKLLHEALLLFKTLKSP), 69 to 103 (PVLAWKSVIRCFTDQSLFSKALASFVEMRASGRCP), 104 to 138 (DHNVFPSVLKSCTMMMDLRFGESVHGFIVRLGMDC), 139 to 172 (DLYTGNALMNMYAKLLGMGSKISVGNVFDEMPQR), 206 to 240 (DVVSYNTIIAGYAQSGMYEDALRMVREMGTTDLKP), 241 to 275 (DSFTLSSVLPIFSEYVDVIKGKEIHGYVIRKGIDS), 276 to 306 (DVYIGSSLVDMYAKSARIEDSERVFSRLYCR), 307 to 341 (DGISWNSLVAGYVQNGRYNEALRLFRQMVTAKVKP), 342 to 376 (GAVAFSSVIPACAHLATLHLGKQLHGYVLRGGFGS), 377 to 407 (NIFIASALVDMYSKCGNIKAARKIFDRMNVL), 408 to 442 (DEVSWTAIIMGHALHGHGHEAVSLFEEMKRQGVKP), 443 to 473 (NQVAFVAVLTACSHVGLVDEAWGYFNSMTKV), and 479 to 509 (ELEHYAAVADLLGRAGKLEEAYNFISKMCVE). The segment at 514–589 (VWSTLLSSCS…KPACSWIEMK (76 aa)) is type E motif. Residues 590–620 (NKTHGFVSGDRSHPSMDKINEFLKAVMEQME) are type E(+) motif. The interval 621 to 715 (KEGYVADTSG…RGNCSCGDYW (95 aa)) is type DYW motif.

Belongs to the PPR family. PCMP-H subfamily.

This chain is Putative pentatricopeptide repeat-containing protein At3g23330 (PCMP-H32), found in Arabidopsis thaliana (Mouse-ear cress).